Reading from the N-terminus, the 352-residue chain is tRNA N6-adenosine threonylcarbamoyltransferase (352 aa).

Residues His117 and His121 each coordinate Fe cation. Substrate-binding positions include 140–144 (LVSGG), Asp173, Gly186, and Asn287. Asp315 serves as a coordination point for Fe cation.

Belongs to the KAE1 / TsaD family. The cofactor is Fe(2+).

Its subcellular location is the cytoplasm. It carries out the reaction L-threonylcarbamoyladenylate + adenosine(37) in tRNA = N(6)-L-threonylcarbamoyladenosine(37) in tRNA + AMP + H(+). Functionally, required for the formation of a threonylcarbamoyl group on adenosine at position 37 (t(6)A37) in tRNAs that read codons beginning with adenine. Is involved in the transfer of the threonylcarbamoyl moiety of threonylcarbamoyl-AMP (TC-AMP) to the N6 group of A37, together with TsaE and TsaB. TsaD likely plays a direct catalytic role in this reaction. This Psychrobacter cryohalolentis (strain ATCC BAA-1226 / DSM 17306 / VKM B-2378 / K5) protein is tRNA N6-adenosine threonylcarbamoyltransferase.